The chain runs to 754 residues: DNA topoisomerase 4 subunit A (754 aa).

The Topo IIA-type catalytic domain occupies 38-501 (LPHIGDGLKP…EARALSETEL (464 aa)). The active-site O-(5'-phospho-DNA)-tyrosine intermediate is tyrosine 127.

This sequence belongs to the type II topoisomerase GyrA/ParC subunit family. ParC type 1 subfamily. In terms of assembly, heterotetramer composed of ParC and ParE.

The protein resides in the cell membrane. It catalyses the reaction ATP-dependent breakage, passage and rejoining of double-stranded DNA.. Functionally, topoisomerase IV is essential for chromosome segregation. It relaxes supercoiled DNA. Performs the decatenation events required during the replication of a circular DNA molecule. The chain is DNA topoisomerase 4 subunit A from Pseudomonas aeruginosa (strain ATCC 15692 / DSM 22644 / CIP 104116 / JCM 14847 / LMG 12228 / 1C / PRS 101 / PAO1).